A 180-amino-acid polypeptide reads, in one-letter code: Probable RNA 2'-phosphotransferase (180 aa).

The protein belongs to the KptA/TPT1 family.

Removes the 2'-phosphate from RNA via an intermediate in which the phosphate is ADP-ribosylated by NAD followed by a presumed transesterification to release the RNA and generate ADP-ribose 1''-2''-cyclic phosphate (APPR&gt;P). May function as an ADP-ribosylase. This is Probable RNA 2'-phosphotransferase from Pectobacterium atrosepticum (strain SCRI 1043 / ATCC BAA-672) (Erwinia carotovora subsp. atroseptica).